A 58-amino-acid chain; its full sequence is Small ribosomal subunit protein bS21B (58 aa).

Belongs to the bacterial ribosomal protein bS21 family.

This Trichormus variabilis (strain ATCC 29413 / PCC 7937) (Anabaena variabilis) protein is Small ribosomal subunit protein bS21B.